The chain runs to 83 residues: RNA-binding protein Hfq (83 aa).

The 60-residue stretch at 9-68 (DPFLNALRKERIPVSIYLVNGIKLQGQVESFDQFVILLKNTVSQMVYKHAISTVVPSRAL) folds into the Sm domain.

The protein belongs to the Hfq family. Homohexamer.

Functionally, RNA chaperone that binds small regulatory RNA (sRNAs) and mRNAs to facilitate mRNA translational regulation in response to envelope stress, environmental stress and changes in metabolite concentrations. Also binds with high specificity to tRNAs. The chain is RNA-binding protein Hfq from Pseudoalteromonas atlantica (strain T6c / ATCC BAA-1087).